The chain runs to 321 residues: Methionine import ATP-binding protein MetN (321 aa).

In terms of domain architecture, ABC transporter spans 2-241 (INAVDLHKVY…PGSLLARSLF (240 aa)). 38–45 (GPSGAGKS) contributes to the ATP binding site.

Belongs to the ABC transporter superfamily. Methionine importer (TC 3.A.1.24) family. In terms of assembly, the complex is composed of two ATP-binding proteins (MetN), two transmembrane proteins (MetI) and a solute-binding protein (MetQ).

The protein localises to the cell membrane. The enzyme catalyses L-methionine(out) + ATP + H2O = L-methionine(in) + ADP + phosphate + H(+). It catalyses the reaction D-methionine(out) + ATP + H2O = D-methionine(in) + ADP + phosphate + H(+). Functionally, part of the ABC transporter complex MetNIQ involved in methionine import. Responsible for energy coupling to the transport system. This Thermobifida fusca (strain YX) protein is Methionine import ATP-binding protein MetN.